We begin with the raw amino-acid sequence, 394 residues long: Transcriptional regulator Myc-1 (394 aa).

An O-linked (GlcNAc) threonine glycan is attached at Thr58. Residues 76–84 (EMVSEFLGD) carry the 9aaTAD motif. Disordered regions lie at residues 177-247 (SGKS…SRYP) and 283-318 (EASS…HNVL). Residues 205-226 (DSEEEEEEEEEEEEEEEEEEID) show a composition bias toward acidic residues. Basic and acidic residues predominate over residues 229 to 238 (TVEKRQKKNE). The bHLH domain maps to 310–362 (DKRRTHNVLERQRRNELKLSFFALRDEIPDVANNEKAAKVVILKKATECIHSM). Residues 369-390 (LLSIKEQLRRKSEQLKHRLQLL) are leucine-zipper.

In terms of assembly, efficient DNA binding requires dimerization with another bHLH protein. Binds DNA as a heterodimer with MAX.

It is found in the nucleus. Functionally, transcription factor that binds DNA in a non-specific manner, yet also specifically recognizes the core sequence 5'-CAC[GA]TG-3'. Activates the transcription of growth-related genes. The chain is Transcriptional regulator Myc-1 (myca) from Cyprinus carpio (Common carp).